The sequence spans 300 residues: MSIRSLAYMRIEATDMSAWREYGLKVLGMVEGKGSDPDALYLRMDDFPARLVIFPGEHDRLSVSGWETANAAELQEVRDNLSAAGVAFKEGTAEQLQDRRVDELITFEDPSGNTLEAFHGAALEHRRVVSPYGHKFVTGEQGLGHVVLSTTDDEASLRFYRDVLGFRLRDSMRLPPQLVGRPADGKPAWLRFFGCNPRHHSLAFLPMPTPSGIVHLMIEVENSDDVGLCLDRALRKKVKMSATLGRHVNDLMLSFYMKTPGGFDIEFGCEGRQVEDESWIARESTAVSLWGHDFSVGMQP.

VOC domains follow at residues 5-120 (SLAY…AFHG) and 142-270 (GLGH…FGCE). A Fe cation-binding site is contributed by His145. Residues His200, His215, Asp250, and Tyr256 each contribute to the substrate site. His215 contacts Fe cation. Position 266 (Glu266) interacts with Fe cation.

The protein belongs to the extradiol ring-cleavage dioxygenase family. As to quaternary structure, homodimer. Fe(2+) is required as a cofactor.

The enzyme catalyses 3,4-dihydroxy-9,10-secoandrosta-1,3,5(10)-triene-9,17-dione + O2 = (1E,2Z)-3-hydroxy-5,9,17-trioxo-4,5:9,10-disecoandrosta-1(10),2-dien-4-oate + H(+). Its pathway is steroid metabolism; cholesterol metabolism. Catalyzes the meta-cleavage of 3,4-dihydroxy-9,10-seconandrost-1,3,5(10)-triene-9,17-dione (3,4-DHSA) to produce 4,5-9,10-diseco-3-hydroxy-5,9,17-trioxoandrosta-1(10),2-diene-4-oic acid (4,9-DSHA). Also involved in biphenyl and polychlorinated biphenyls (PCBs) degradation. The sequence is that of Iron-dependent extradiol dioxygenase (hsaC) from Rhodococcus jostii (strain RHA1).